The chain runs to 362 residues: Golgi-resident adenosine 3',5'-bisphosphate 3'-phosphatase (362 aa).

At Met1 the chain carries N-acetylmethionine. At 1–12 the chain is on the cytoplasmic side; that stretch reads MAPMGIRLSPLG. A helical membrane pass occupies residues 13-33; sequence VAVFCLLGLGVLYHLYSGFLA. The Lumenal segment spans residues 34–362; sequence GRFSLFGLGG…LPDLEKTGHK (329 aa). The interval 88 to 109 is disordered; the sequence is RESNVLHEKSKGKTREGADDKM. The active-site Proton acceptor is the Asp113. Positions 136, 177, 179, and 180 each coordinate Mg(2+). Residue Thr182 is the Proton acceptor of the active site. AMP contacts are provided by Ser245 and His248. N-linked (GlcNAc...) asparagine glycosylation is present at Asn262. Residues Gly271 and Lys275 each contribute to the AMP site. Position 303 (Asp303) interacts with Mg(2+).

Belongs to the inositol monophosphatase superfamily. Requires Mg(2+) as cofactor. In terms of processing, contains N-linked glycan resistant to endoglycosydase H.

The protein localises to the golgi apparatus. It localises to the trans-Golgi network membrane. The catalysed reaction is adenosine 3',5'-bisphosphate + H2O = AMP + phosphate. It participates in sulfur metabolism. Strongly inhibited by lithium. In terms of biological role, exhibits 3'-nucleotidase activity toward adenosine 3',5'-bisphosphate (PAP), namely hydrolyzes adenosine 3',5'-bisphosphate into adenosine 5'-monophosphate (AMP) and a phosphate. May play a role in the formation of skeletal elements derived through endochondral ossification, possibly by clearing adenosine 3',5'-bisphosphate produced by Golgi sulfotransferases during glycosaminoglycan sulfation. Has no activity toward 3'-phosphoadenosine 5'-phosphosulfate (PAPS) or inositol phosphate (IP) substrates including I(1)P, I(1,4)P2, I(1,3,4)P3, I(1,4,5)P3 and I(1,3,4,5)P4. The protein is Golgi-resident adenosine 3',5'-bisphosphate 3'-phosphatase (BPNT2) of Bos taurus (Bovine).